The chain runs to 369 residues: tRNA 2-selenouridine synthase (369 aa).

In terms of domain architecture, Rhodanese spans 12-136 (FLEDTPLMDV…LRNFLFETTR (125 aa)). Cysteine 95 functions as the S-selanylcysteine intermediate in the catalytic mechanism.

This sequence belongs to the SelU family. Monomer.

The enzyme catalyses 5-methylaminomethyl-2-thiouridine(34) in tRNA + selenophosphate + (2E)-geranyl diphosphate + H2O + H(+) = 5-methylaminomethyl-2-selenouridine(34) in tRNA + (2E)-thiogeraniol + phosphate + diphosphate. The catalysed reaction is 5-methylaminomethyl-2-thiouridine(34) in tRNA + (2E)-geranyl diphosphate = 5-methylaminomethyl-S-(2E)-geranyl-thiouridine(34) in tRNA + diphosphate. It carries out the reaction 5-methylaminomethyl-S-(2E)-geranyl-thiouridine(34) in tRNA + selenophosphate + H(+) = 5-methylaminomethyl-2-(Se-phospho)selenouridine(34) in tRNA + (2E)-thiogeraniol. It catalyses the reaction 5-methylaminomethyl-2-(Se-phospho)selenouridine(34) in tRNA + H2O = 5-methylaminomethyl-2-selenouridine(34) in tRNA + phosphate. Functionally, involved in the post-transcriptional modification of the uridine at the wobble position (U34) of tRNA(Lys), tRNA(Glu) and tRNA(Gln). Catalyzes the conversion of 2-thiouridine (S2U-RNA) to 2-selenouridine (Se2U-RNA). Acts in a two-step process involving geranylation of 2-thiouridine (S2U) to S-geranyl-2-thiouridine (geS2U) and subsequent selenation of the latter derivative to 2-selenouridine (Se2U) in the tRNA chain. In Pseudomonas paraeruginosa (strain DSM 24068 / PA7) (Pseudomonas aeruginosa (strain PA7)), this protein is tRNA 2-selenouridine synthase.